The following is a 443-amino-acid chain: Threonine/serine transporter TdcC (443 aa).

Transmembrane regions (helical) follow at residues 22–42 (TTWT…FFPI), 44–64 (AGFG…PIAF), 97–117 (GVVI…IYGV), 140–160 (FVAL…KDLM), 163–183 (VMSY…LSLI), 207–227 (ILIT…FSPI), 261–281 (MLMV…LSPA), 311–331 (FAIT…FKSF), 366–386 (ISMI…PNIL), 389–409 (IEAM…MYAI), and 423–443 (DNVF…YKLF).

The protein belongs to the amino acid/polyamine transporter 2 family. SdaC/TdcC subfamily.

Its subcellular location is the cell inner membrane. It carries out the reaction L-threonine(in) + H(+)(in) = L-threonine(out) + H(+)(out). The catalysed reaction is L-serine(in) + H(+)(in) = L-serine(out) + H(+)(out). Functionally, involved in the import of threonine and serine into the cell, with the concomitant import of a proton (symport system). The polypeptide is Threonine/serine transporter TdcC (Shigella sonnei (strain Ss046)).